Consider the following 210-residue polypeptide: Large ribosomal subunit protein bL25 (210 aa).

The segment at 179–210 (LPPQQEEEIHSGEQQEPGHPDAEEGRETTPES) is disordered. Over residues 185 to 210 (EEIHSGEQQEPGHPDAEEGRETTPES) the composition is skewed to basic and acidic residues.

Belongs to the bacterial ribosomal protein bL25 family. CTC subfamily. Part of the 50S ribosomal subunit; part of the 5S rRNA/L5/L18/L25 subcomplex. Contacts the 5S rRNA. Binds to the 5S rRNA independently of L5 and L18.

In terms of biological role, this is one of the proteins that binds to the 5S RNA in the ribosome where it forms part of the central protuberance. The sequence is that of Large ribosomal subunit protein bL25 from Geobacillus sp. (strain WCH70).